A 188-amino-acid chain; its full sequence is Cytochrome b-245 chaperone 1 homolog (188 aa).

A helical membrane pass occupies residues 20 to 42; sequence SIRSWSLLVGILSVGLAAAYYST.

This sequence belongs to the CYBC1 family.

Its subcellular location is the endoplasmic reticulum membrane. Functionally, functions as a chaperone necessary for a stable expression of the CYBA and CYBB subunits of the cytochrome b-245 heterodimer. This is Cytochrome b-245 chaperone 1 homolog (cybc1) from Xenopus laevis (African clawed frog).